Reading from the N-terminus, the 311-residue chain is MNRKHLPFIFALLLCLSPWVSSPTALVLGFLLASTGLVPSQLPISTYTKKLLSYSIIGLGFGIQFQQAIAVTSDGIGLIVVTIAGTLLLGFLVAKVIKLETTTAYLISAGTAICGGSAIAAVAPAIKAKDQQIALALATVFVLNSLALFIFPVIGHALALDQQTFGTWAAIAIHDTSSVVGAASAYGEQALTTATTLKLARALWIIPVALLSAILFARGNGEEGKRKLVLPYFIFWYCAAIAFSDLFPQFESVYQGIFSVAKQALVVCLFLIGCSISVEKLKSAGAKPLIFGLSLWVVISTTSLSWLLLTR.

10 consecutive transmembrane segments (helical) span residues 8-28 (FIFA…ALVL), 51-71 (LLSY…AIAV), 74-94 (DGIG…FLVA), 106-126 (LISA…APAI), 133-153 (IALA…IFPV), 165-185 (FGTW…AASA), 197-217 (LKLA…ILFA), 228-248 (LVLP…DLFP), 256-276 (GIFS…GCSI), and 289-309 (LIFG…WLLL).

Belongs to the UPF0324 family.

The protein resides in the cell membrane. The chain is UPF0324 membrane protein VV1_3166 from Vibrio vulnificus (strain CMCP6).